The following is a 1467-amino-acid chain: Actin cytoskeleton-regulatory complex protein pan1 (1467 aa).

The interval 1–157 (MYSSSNSFLG…PPPKSSGSKI (157 aa)) is disordered. The segment covering 25-48 (QPPYSQLPQGQQQIPQQTGFQPQP) has biased composition (low complexity). The span at 50-75 (GYGSQSASHLQPQPTGFPTGQLQPQF) shows a compositional bias: polar residues. Low complexity predominate over residues 77–101 (GFPGAAPPQQQQQFGGYQAPAQQPQ). Polar residues predominate over residues 129–139 (RTSSEIANSFS). Positions 169-257 (DQAKFEQLFK…DKIKNEVSGM (89 aa)) constitute an EH 1 domain. One can recognise an EF-hand 1 domain in the interval 201-236 (LPGSELSKIWVLSDTTKSGQLFFPEFALAMYLCNLR). The interval 266–376 (PDTEPQGAAR…PQATGYNGPR (111 aa)) is disordered. Pro residues predominate over residues 292-301 (PPAPQHPKPQ). 2 stretches are compositionally biased toward polar residues: residues 305–314 (NAQFLSQLAA) and 340–370 (LAPQ…PQAT). Residues 458-547 (EKKIYDDLFR…PELIPPSTRN (90 aa)) enclose the EH 2 domain. The region spanning 491–526 (LDRKDLERIWTLADPNNRGRLNMDEFAVAMHLIYRK) is the EF-hand 2 domain. Disordered stretches follow at residues 613–643 (AGYR…EELS), 822–864 (RADR…HERR), 888–1087 (RTAH…ELLK), and 1101–1467 (EQVR…RVLD). Residues 634 to 758 (TSQASEEELS…LFRLKDAKAH (125 aa)) adopt a coiled-coil conformation. Residues 892-912 (IRKEEESRASAQEQRLRHEEP) are compositionally biased toward basic and acidic residues. The segment covering 919–934 (LSPAPSAGSAGSLPGS) has biased composition (low complexity). Composition is skewed to basic and acidic residues over residues 935 to 953 (THED…RIAE), 973 to 1009 (RQER…EQRS), 1054 to 1087 (AARE…ELLK), 1101 to 1129 (EQVR…EKEA), and 1136 to 1153 (AEIE…LELE). Residues 965-1162 (DTSETLLQRQ…ERLDEESSSD (198 aa)) adopt a coiled-coil conformation. Positions 1154 to 1165 (RLDEESSSDDEG) are enriched in acidic residues. The span at 1171–1182 (PEDSTPTQSQLL) shows a compositional bias: polar residues. Positions 1183–1197 (PTVTPAAPVSAPESE) are enriched in low complexity. Residues 1279 to 1288 (LERKSRARPE) are compositionally biased toward basic and acidic residues. Composition is skewed to pro residues over residues 1369-1381 (AAPP…PPAA) and 1389-1430 (VAPP…PTPA). Positions 1434–1451 (DRSALLASIQKGKGLRKV) constitute a WH2 domain.

It belongs to the PAN1 family. In terms of assembly, component of the PAN1 actin cytoskeleton-regulatory complex.

Its subcellular location is the cell membrane. It is found in the endosome membrane. The protein resides in the cytoplasm. It localises to the cytoskeleton. The protein localises to the actin patch. Component of the PAN1 actin cytoskeleton-regulatory complex required for the internalization of endosomes during actin-coupled endocytosis. The complex links the site of endocytosis to the cell membrane-associated actin cytoskeleton. Mediates uptake of external molecules and vacuolar degradation of plasma membrane proteins. Plays a role in the proper organization of the cell membrane-associated actin cytoskeleton and promotes its destabilization. This is Actin cytoskeleton-regulatory complex protein pan1 (pan1) from Aspergillus fumigatus (strain CBS 144.89 / FGSC A1163 / CEA10) (Neosartorya fumigata).